Reading from the N-terminus, the 516-residue chain is Extracellular endo-inulinase inu2 (516 aa).

Positions 1-23 are cleaved as a signal peptide; that stretch reads MLNPKVAYMVWMTCLGLTLPSQA. Substrate is bound by residues 41-43 and N61; that span reads MNE. E43 is an active-site residue. N-linked (GlcNAc...) asparagine glycans are attached at residues N108 and N109. D176 serves as a coordination point for substrate. An N-linked (GlcNAc...) asparagine glycan is attached at N210. N320 lines the substrate pocket. N-linked (GlcNAc...) asparagine glycosylation occurs at N372.

This sequence belongs to the glycosyl hydrolase 32 family.

Its subcellular location is the secreted. It carries out the reaction Endohydrolysis of (2-&gt;1)-beta-D-fructosidic linkages in inulin.. In terms of biological role, endo-inulinase involved in utilization of the plant storage polymer inulin, consisting of fructooligosaccharides with a degree of polymerization (DP) value from 2 to 60. This chain is Extracellular endo-inulinase inu2 (inu2), found in Aspergillus ficuum.